Reading from the N-terminus, the 455-residue chain is UDP-N-acetylmuramoylalanine--D-glutamate ligase (455 aa).

119 to 125 (GTNGKTT) lines the ATP pocket.

It belongs to the MurCDEF family.

The protein localises to the cytoplasm. It catalyses the reaction UDP-N-acetyl-alpha-D-muramoyl-L-alanine + D-glutamate + ATP = UDP-N-acetyl-alpha-D-muramoyl-L-alanyl-D-glutamate + ADP + phosphate + H(+). It participates in cell wall biogenesis; peptidoglycan biosynthesis. In terms of biological role, cell wall formation. Catalyzes the addition of glutamate to the nucleotide precursor UDP-N-acetylmuramoyl-L-alanine (UMA). The protein is UDP-N-acetylmuramoylalanine--D-glutamate ligase of Listeria innocua serovar 6a (strain ATCC BAA-680 / CLIP 11262).